The chain runs to 221 residues: Sugar transporter SWEET1 (221 aa).

The next 7 helical transmembrane spans lie at 3 to 23 (AGGF…LGMF), 42 to 62 (VQFL…SYGA), 68 to 88 (ILIV…LAYL), 96 to 116 (VVLL…GYFW), 126 to 146 (LQLL…SPLA), 160 to 180 (LSYP…LYGF), and 186 to 206 (YIMV…WLFW). The MtN3/slv 1 domain maps to 10-94 (LIYGACVVFT…LAYLHYCPRK (85 aa)). Positions 127-212 (QLLGLFCSVF…WLFWKYPQEQ (86 aa)) constitute a MtN3/slv 2 domain. A mediates interaction with TRPV2 region spans residues 149-221 (AKVIQTKSTQ…QDRNYWFLQT (73 aa)).

Belongs to the SWEET sugar transporter family. In terms of assembly, interacts with TRPV2; the interaction probably occurs intracellularly and depends on TRPV2 N-glycosylation.

The protein localises to the golgi apparatus membrane. Its subcellular location is the cell membrane. Functionally, mediates sugar transport across membranes. May stimulate V(D)J recombination by the activation of RAG1. This Papio anubis (Olive baboon) protein is Sugar transporter SWEET1 (SLC50A1).